The primary structure comprises 389 residues: Cytochrome b (389 aa).

Helical transmembrane passes span 32–52 (FGFFSLICLIIQLVSGILLAM), 76–98 (WLLRYIHANGASFFFIVVYIHML), 113–133 (LWVSGVVIFLLLIITGFLGYV), 179–199 (FFSLHYLCPFIIVGLVGLHII), 225–245 (FTIKDLFSFMIFLVLFFTFVF), 290–310 (LGVLALVLAIVVLAFLPFLTI), 325–345 (LFWSFLALCFFLGFLGSQPAA), and 353–373 (LYSTIAYFIYILVLFPCIYIV). Heme b is bound by residues His-82 and His-96. Positions 183 and 197 each coordinate heme b.

This sequence belongs to the cytochrome b family. As to quaternary structure, the main subunits of complex b-c1 are: cytochrome b, cytochrome c1 and the Rieske protein. Heme b serves as cofactor.

Its subcellular location is the mitochondrion inner membrane. Component of the ubiquinol-cytochrome c reductase complex (complex III or cytochrome b-c1 complex) that is part of the mitochondrial respiratory chain. The b-c1 complex mediates electron transfer from ubiquinol to cytochrome c. Contributes to the generation of a proton gradient across the mitochondrial membrane that is then used for ATP synthesis. The chain is Cytochrome b (cytB) from Dictyostelium discoideum (Social amoeba).